The sequence spans 541 residues: Chaperonin GroEL 2 (541 aa).

ATP is bound by residues 29–32 (TLGP), 86–90 (DGTTT), glycine 413, and aspartate 492.

The protein belongs to the chaperonin (HSP60) family. As to quaternary structure, forms a cylinder of 14 subunits composed of two heptameric rings stacked back-to-back. Interacts with the co-chaperonin GroES.

The protein localises to the cytoplasm. The catalysed reaction is ATP + H2O + a folded polypeptide = ADP + phosphate + an unfolded polypeptide.. Its function is as follows. Together with its co-chaperonin GroES, plays an essential role in assisting protein folding. The GroEL-GroES system forms a nano-cage that allows encapsulation of the non-native substrate proteins and provides a physical environment optimized to promote and accelerate protein folding. The protein is Chaperonin GroEL 2 of Nocardia farcinica (strain IFM 10152).